Consider the following 161-residue polypeptide: Large ribosomal subunit protein uL11 (161 aa).

The protein belongs to the universal ribosomal protein uL11 family. As to quaternary structure, part of the ribosomal stalk of the 50S ribosomal subunit. Interacts with L10 and the large rRNA to form the base of the stalk. L10 forms an elongated spine to which L12 dimers bind in a sequential fashion forming a multimeric L10(L12)X complex.

Functionally, forms part of the ribosomal stalk which helps the ribosome interact with GTP-bound translation factors. This is Large ribosomal subunit protein uL11 from Methanosarcina mazei (strain ATCC BAA-159 / DSM 3647 / Goe1 / Go1 / JCM 11833 / OCM 88) (Methanosarcina frisia).